The chain runs to 353 residues: UDP-N-acetylglucosamine--N-acetylmuramyl-(pentapeptide) pyrophosphoryl-undecaprenol N-acetylglucosamine transferase (353 aa).

UDP-N-acetyl-alpha-D-glucosamine contacts are provided by residues 10–12 (TGG), N124, S183, and Q283.

This sequence belongs to the glycosyltransferase 28 family. MurG subfamily.

The protein localises to the cell inner membrane. It carries out the reaction di-trans,octa-cis-undecaprenyl diphospho-N-acetyl-alpha-D-muramoyl-L-alanyl-D-glutamyl-meso-2,6-diaminopimeloyl-D-alanyl-D-alanine + UDP-N-acetyl-alpha-D-glucosamine = di-trans,octa-cis-undecaprenyl diphospho-[N-acetyl-alpha-D-glucosaminyl-(1-&gt;4)]-N-acetyl-alpha-D-muramoyl-L-alanyl-D-glutamyl-meso-2,6-diaminopimeloyl-D-alanyl-D-alanine + UDP + H(+). It participates in cell wall biogenesis; peptidoglycan biosynthesis. Cell wall formation. Catalyzes the transfer of a GlcNAc subunit on undecaprenyl-pyrophosphoryl-MurNAc-pentapeptide (lipid intermediate I) to form undecaprenyl-pyrophosphoryl-MurNAc-(pentapeptide)GlcNAc (lipid intermediate II). The sequence is that of UDP-N-acetylglucosamine--N-acetylmuramyl-(pentapeptide) pyrophosphoryl-undecaprenol N-acetylglucosamine transferase from Helicobacter pylori (strain G27).